Here is a 142-residue protein sequence, read N- to C-terminus: Small ribosomal subunit protein bS6 (142 aa).

The segment covering 110 to 133 (NKKPSHAKEKHEKTEHTHSHHLEE) has biased composition (basic and acidic residues). The disordered stretch occupies residues 110 to 142 (NKKPSHAKEKHEKTEHTHSHHLEEAESVGSHSE).

Belongs to the bacterial ribosomal protein bS6 family.

Functionally, binds together with bS18 to 16S ribosomal RNA. The polypeptide is Small ribosomal subunit protein bS6 (Helicobacter pylori (strain HPAG1)).